The following is a 247-amino-acid chain: Thioredoxin reductase-like selenoprotein T homolog selt-1.1 (247 aa).

The first 26 residues, 1–26 (MSRFGVFIIGVLFFMSVCDVLRTVSA), serve as a signal peptide directing secretion. An intrachain disulfide couples cysteine 92 to cysteine 95.

Belongs to the SelWTH family. SELT subfamily. As to expression, broadly expressed in neurons of nervous system including ADL, ASH, ASI, ASJ, ASK and AWB amphid sensilla neurons, in epithelial cells including hypodermal, arcade, pharyngeal, vulval and rectal cells, and in somatic muscle cells of the head, neck and body wall, and non-striated pharyngeal muscles.

It localises to the endoplasmic reticulum. The catalysed reaction is [thioredoxin]-dithiol + NADP(+) = [thioredoxin]-disulfide + NADPH + H(+). In terms of biological role, probably has thioredoxin reductase-like oxidoreductase activity. Plays a role in regulating the oxidative stress response, and odorant and pathogenic bacteria avoidance behavior. The sequence is that of Thioredoxin reductase-like selenoprotein T homolog selt-1.1 from Caenorhabditis elegans.